A 72-amino-acid chain; its full sequence is Translation initiation factor IF-1 (72 aa).

The S1-like domain occupies 1–72; the sequence is MAKEEAIEVE…TRGRIIFRER (72 aa).

It belongs to the IF-1 family. In terms of assembly, component of the 30S ribosomal translation pre-initiation complex which assembles on the 30S ribosome in the order IF-2 and IF-3, IF-1 and N-formylmethionyl-tRNA(fMet); mRNA recruitment can occur at any time during PIC assembly.

It localises to the cytoplasm. In terms of biological role, one of the essential components for the initiation of protein synthesis. Stabilizes the binding of IF-2 and IF-3 on the 30S subunit to which N-formylmethionyl-tRNA(fMet) subsequently binds. Helps modulate mRNA selection, yielding the 30S pre-initiation complex (PIC). Upon addition of the 50S ribosomal subunit IF-1, IF-2 and IF-3 are released leaving the mature 70S translation initiation complex. This is Translation initiation factor IF-1 from Treponema denticola (strain ATCC 35405 / DSM 14222 / CIP 103919 / JCM 8153 / KCTC 15104).